We begin with the raw amino-acid sequence, 276 residues long: Pirin-like protein CC_0481 (276 aa).

Belongs to the pirin family.

The protein is Pirin-like protein CC_0481 of Caulobacter vibrioides (strain ATCC 19089 / CIP 103742 / CB 15) (Caulobacter crescentus).